Consider the following 300-residue polypeptide: GTPase Era (300 aa).

Residues Arg8–Glu176 form the Era-type G domain. The tract at residues Gly16 to Ser23 is G1. Gly16–Ser23 is a GTP binding site. The tract at residues Gln42 to His46 is G2. The G3 stretch occupies residues Asp63–Gly66. Residues Asp63–Met67 and Asn125–Asp128 contribute to the GTP site. The segment at Asn125 to Asp128 is G4. The G5 stretch occupies residues Ile155 to Ala157. One can recognise a KH type-2 domain in the interval Val199–Gly283.

The protein belongs to the TRAFAC class TrmE-Era-EngA-EngB-Septin-like GTPase superfamily. Era GTPase family. In terms of assembly, monomer.

The protein resides in the cytoplasm. It localises to the cell inner membrane. Its function is as follows. An essential GTPase that binds both GDP and GTP, with rapid nucleotide exchange. Plays a role in 16S rRNA processing and 30S ribosomal subunit biogenesis and possibly also in cell cycle regulation and energy metabolism. The polypeptide is GTPase Era (Pseudomonas putida (strain ATCC 700007 / DSM 6899 / JCM 31910 / BCRC 17059 / LMG 24140 / F1)).